The following is a 361-amino-acid chain: 3-dehydroquinate synthase (361 aa).

This sequence belongs to the archaeal-type DHQ synthase family.

It carries out the reaction 2-amino-2,3,7-trideoxy-D-lyxo-hept-6-ulosonate + NAD(+) + H2O = 3-dehydroquinate + NH4(+) + NADH + H(+). Catalyzes the oxidative deamination and cyclization of 2-amino-3,7-dideoxy-D-threo-hept-6-ulosonic acid (ADH) to yield 3-dehydroquinate (DHQ), which is fed into the canonical shikimic pathway of aromatic amino acid biosynthesis. The protein is 3-dehydroquinate synthase of Methanococcus maripaludis (strain DSM 14266 / JCM 13030 / NBRC 101832 / S2 / LL).